The following is a 125-amino-acid chain: Glycine cleavage system H protein (125 aa).

A Lipoyl-binding domain is found at 23 to 104 (VVYIGITDYA…PYENWILKVK (82 aa)). Residue Lys64 is modified to N6-lipoyllysine.

The protein belongs to the GcvH family. The glycine cleavage system is composed of four proteins: P, T, L and H. Requires (R)-lipoate as cofactor.

Functionally, the glycine cleavage system catalyzes the degradation of glycine. The H protein shuttles the methylamine group of glycine from the P protein to the T protein. The protein is Glycine cleavage system H protein of Clostridioides difficile (strain 630) (Peptoclostridium difficile).